Reading from the N-terminus, the 145-residue chain is 3-dehydroquinate dehydratase (145 aa).

The active-site Proton acceptor is the Tyr-24. Substrate is bound by residues Asn-76, His-82, and Asp-89. The Proton donor role is filled by His-102. Residues 103 to 104 and Arg-113 contribute to the substrate site; that span reads LS.

The protein belongs to the type-II 3-dehydroquinase family. In terms of assembly, homododecamer.

It carries out the reaction 3-dehydroquinate = 3-dehydroshikimate + H2O. It functions in the pathway metabolic intermediate biosynthesis; chorismate biosynthesis; chorismate from D-erythrose 4-phosphate and phosphoenolpyruvate: step 3/7. Catalyzes a trans-dehydration via an enolate intermediate. The polypeptide is 3-dehydroquinate dehydratase (Nitrosomonas eutropha (strain DSM 101675 / C91 / Nm57)).